The following is a 252-amino-acid chain: 3-deoxy-manno-octulosonate cytidylyltransferase (252 aa).

This sequence belongs to the KdsB family.

The protein localises to the cytoplasm. The catalysed reaction is 3-deoxy-alpha-D-manno-oct-2-ulosonate + CTP = CMP-3-deoxy-beta-D-manno-octulosonate + diphosphate. Its pathway is nucleotide-sugar biosynthesis; CMP-3-deoxy-D-manno-octulosonate biosynthesis; CMP-3-deoxy-D-manno-octulosonate from 3-deoxy-D-manno-octulosonate and CTP: step 1/1. It functions in the pathway bacterial outer membrane biogenesis; lipopolysaccharide biosynthesis. In terms of biological role, activates KDO (a required 8-carbon sugar) for incorporation into bacterial lipopolysaccharide in Gram-negative bacteria. The polypeptide is 3-deoxy-manno-octulosonate cytidylyltransferase (Trichlorobacter lovleyi (strain ATCC BAA-1151 / DSM 17278 / SZ) (Geobacter lovleyi)).